Consider the following 307-residue polypeptide: Ribosomal RNA small subunit methyltransferase H (307 aa).

S-adenosyl-L-methionine is bound by residues 34 to 36, D54, F79, D101, and Q108; that span reads GGH.

The protein belongs to the methyltransferase superfamily. RsmH family.

The protein resides in the cytoplasm. It catalyses the reaction cytidine(1402) in 16S rRNA + S-adenosyl-L-methionine = N(4)-methylcytidine(1402) in 16S rRNA + S-adenosyl-L-homocysteine + H(+). In terms of biological role, specifically methylates the N4 position of cytidine in position 1402 (C1402) of 16S rRNA. The polypeptide is Ribosomal RNA small subunit methyltransferase H (Ruthia magnifica subsp. Calyptogena magnifica).